Consider the following 506-residue polypeptide: Nostrin (506 aa).

The F-BAR domain occupies 1–260 (MRDPLTDCPY…AISKIDIEKD (260 aa)). A Phosphoserine modification is found at Ser-114. Residues 160–222 (SMTEKEKRKL…LELEKERIQL (63 aa)) are a coiled coil. The REM-1 domain maps to 292-372 (AMDKERRKSL…SYKLSSMLAE (81 aa)). The 60-residue stretch at 438-497 (LSSRLCKALYSFQARQDDELNLEKGDIVIIHEKKEGGWWFGSLNGKKGHFPAAYVEELPS) folds into the SH3 domain. A Phosphoserine modification is found at Ser-479.

In terms of assembly, homotrimer. Interacts with DAB2. Interacts with NOS3, DNM2, WASL and CAV1. Interacts (via SH3 domain) with DNM2; this interaction allows the recruitment of NOS3 to dynamin-positive structures. Expressed at highest levels in heart, kidney, placenta and lung, and at lowest levels in brain, thymus and spleen. Present in vascular endothelial cells and placenta. Over-expressed in placenta from women with pre-eclampsia (at protein level).

It localises to the cell membrane. It is found in the cytoplasmic vesicle. Its subcellular location is the cytoplasm. The protein localises to the cytoskeleton. The protein resides in the nucleus. Functionally, multivalent adapter protein which may decrease NOS3 activity by inducing its translocation away from the plasma membrane. The polypeptide is Nostrin (Homo sapiens (Human)).